Here is a 182-residue protein sequence, read N- to C-terminus: MANQVITGIKETAQSITGAARPWGDFLDLSAFSFPSSIADATTRVTQNLTHFRINYSIILSILLGLTLITRPIAILAFIAVGLAWFFLYFAREEPLTIFGFTIDDGIVAVLLIGLSIGSLVTTGVWLRALTTVGFGVLVLILHAALRGTDDLVSDDLESPYGPMLSTSGGGNDGARGDYSGI.

An N-acetylalanine modification is found at A2. Helical transmembrane passes span 68 to 88 (LITR…WFFL), 107 to 127 (IVAV…GVWL), and 129 to 149 (ALTT…LRGT). The interval 163–182 (PMLSTSGGGNDGARGDYSGI) is disordered.

It belongs to the PRA1 family. In terms of assembly, interacts with PRA1F2 and PRA1F3. Interacts with the cauliflower mosaic virus (CaMV) movement protein (via N-terminus). In terms of tissue distribution, expressed in hypocotyls, roots, lateral roots, lateral root caps, columella cells, leaves, shoot apex, stems and flowers.

It is found in the endosome membrane. Functionally, may be involved in both secretory and endocytic intracellular trafficking in the endosomal/prevacuolar compartments. The sequence is that of PRA1 family protein D (PRA1D) from Arabidopsis thaliana (Mouse-ear cress).